A 274-amino-acid polypeptide reads, in one-letter code: Probable S-adenosylmethionine-dependent methyltransferase MT3114 (274 aa).

The disordered stretch occupies residues M1–S24.

The protein belongs to the methyltransferase superfamily.

Probable S-adenosylmethionine-dependent methyltransferase required for the 6-O-methylation of the polysaccharide backbone of 6-O-methylglucosyl lipopolysaccharides (MGLP). The chain is Probable S-adenosylmethionine-dependent methyltransferase MT3114 from Mycobacterium tuberculosis (strain CDC 1551 / Oshkosh).